Consider the following 231-residue polypeptide: Heptaprenylglyceryl phosphate synthase (231 aa).

Position 12 (lysine 12) interacts with sn-glycerol 1-phosphate. Mg(2+) contacts are provided by aspartate 14 and threonine 40. Sn-glycerol 1-phosphate is bound by residues 159–164 (YLEYSG), glycine 189, and 209–210 (GN).

This sequence belongs to the GGGP/HepGP synthase family. Group I subfamily. Homodimer. Mg(2+) serves as cofactor.

It carries out the reaction sn-glycerol 1-phosphate + all-trans-heptaprenyl diphosphate = 3-heptaprenyl-sn-glycero-1-phosphate + diphosphate. Its pathway is membrane lipid metabolism; glycerophospholipid metabolism. Its function is as follows. Prenyltransferase that catalyzes in vivo the transfer of the heptaprenyl moiety of heptaprenyl pyrophosphate (HepPP; 35 carbon atoms) to the C3 hydroxyl of sn-glycerol-1-phosphate (G1P), producing heptaprenylglyceryl phosphate (HepGP). This reaction is an ether-bond-formation step in the biosynthesis of archaea-type G1P-based membrane lipids found in Bacillales. The sequence is that of Heptaprenylglyceryl phosphate synthase from Staphylococcus haemolyticus (strain JCSC1435).